Consider the following 438-residue polypeptide: Na(+)/H(+) antiporter NhaA (438 aa).

Transmembrane regions (helical) follow at residues 23 to 43 (FGGI…NSFV), 62 to 82 (FFIG…LFFL), 104 to 124 (SFPV…YFFL), 133 to 153 (GFGI…MLLG), 162 to 182 (VFLI…IALF), 185 to 205 (TNLK…LALL), 212 to 232 (SLIP…QSGI), 302 to 322 (FLAP…NAGV), 337 to 357 (LGVI…ITFI), 372 to 392 (WWHI…SMFI), and 410 to 430 (IAIL…LFLL).

Belongs to the NhaA Na(+)/H(+) (TC 2.A.33) antiporter family.

Its subcellular location is the cell inner membrane. It catalyses the reaction Na(+)(in) + 2 H(+)(out) = Na(+)(out) + 2 H(+)(in). Its function is as follows. Na(+)/H(+) antiporter that extrudes sodium in exchange for external protons. This Helicobacter acinonychis (strain Sheeba) protein is Na(+)/H(+) antiporter NhaA.